The sequence spans 430 residues: tRNA(Ile)-lysidine synthase (430 aa).

27–32 (SGGSDS) is a binding site for ATP.

This sequence belongs to the tRNA(Ile)-lysidine synthase family.

It localises to the cytoplasm. It catalyses the reaction cytidine(34) in tRNA(Ile2) + L-lysine + ATP = lysidine(34) in tRNA(Ile2) + AMP + diphosphate + H(+). Ligates lysine onto the cytidine present at position 34 of the AUA codon-specific tRNA(Ile) that contains the anticodon CAU, in an ATP-dependent manner. Cytidine is converted to lysidine, thus changing the amino acid specificity of the tRNA from methionine to isoleucine. In Rickettsia bellii (strain OSU 85-389), this protein is tRNA(Ile)-lysidine synthase.